A 184-amino-acid chain; its full sequence is ATP synthase subunit b, chloroplastic (184 aa).

Residues 27-49 (LATNPINLSVVLGVLIFFGKGVL) form a helical membrane-spanning segment.

Belongs to the ATPase B chain family. In terms of assembly, F-type ATPases have 2 components, F(1) - the catalytic core - and F(0) - the membrane proton channel. F(1) has five subunits: alpha(3), beta(3), gamma(1), delta(1), epsilon(1). F(0) has four main subunits: a(1), b(1), b'(1) and c(10-14). The alpha and beta chains form an alternating ring which encloses part of the gamma chain. F(1) is attached to F(0) by a central stalk formed by the gamma and epsilon chains, while a peripheral stalk is formed by the delta, b and b' chains.

Its subcellular location is the plastid. The protein localises to the chloroplast thylakoid membrane. Its function is as follows. F(1)F(0) ATP synthase produces ATP from ADP in the presence of a proton or sodium gradient. F-type ATPases consist of two structural domains, F(1) containing the extramembraneous catalytic core and F(0) containing the membrane proton channel, linked together by a central stalk and a peripheral stalk. During catalysis, ATP synthesis in the catalytic domain of F(1) is coupled via a rotary mechanism of the central stalk subunits to proton translocation. Component of the F(0) channel, it forms part of the peripheral stalk, linking F(1) to F(0). The chain is ATP synthase subunit b, chloroplastic from Oenothera argillicola (Appalachian evening primrose).